The sequence spans 562 residues: Dihydroxy-acid dehydratase (562 aa).

Asp80 contacts Mg(2+). Residue Cys121 participates in [2Fe-2S] cluster binding. Mg(2+) contacts are provided by Asp122 and Lys123. Lys123 carries the post-translational modification N6-carboxylysine. Position 194 (Cys194) interacts with [2Fe-2S] cluster. Residue Glu446 coordinates Mg(2+). The active-site Proton acceptor is the Ser472.

This sequence belongs to the IlvD/Edd family. In terms of assembly, homodimer. It depends on [2Fe-2S] cluster as a cofactor. Requires Mg(2+) as cofactor.

The enzyme catalyses (2R)-2,3-dihydroxy-3-methylbutanoate = 3-methyl-2-oxobutanoate + H2O. It carries out the reaction (2R,3R)-2,3-dihydroxy-3-methylpentanoate = (S)-3-methyl-2-oxopentanoate + H2O. Its pathway is amino-acid biosynthesis; L-isoleucine biosynthesis; L-isoleucine from 2-oxobutanoate: step 3/4. The protein operates within amino-acid biosynthesis; L-valine biosynthesis; L-valine from pyruvate: step 3/4. Functionally, functions in the biosynthesis of branched-chain amino acids. Catalyzes the dehydration of (2R,3R)-2,3-dihydroxy-3-methylpentanoate (2,3-dihydroxy-3-methylvalerate) into 2-oxo-3-methylpentanoate (2-oxo-3-methylvalerate) and of (2R)-2,3-dihydroxy-3-methylbutanoate (2,3-dihydroxyisovalerate) into 2-oxo-3-methylbutanoate (2-oxoisovalerate), the penultimate precursor to L-isoleucine and L-valine, respectively. The protein is Dihydroxy-acid dehydratase of Macrococcus caseolyticus (strain JCSC5402) (Macrococcoides caseolyticum).